Here is a 279-residue protein sequence, read N- to C-terminus: Tryptophan synthase alpha chain (279 aa).

Residues E50 and D61 each act as proton acceptor in the active site.

Belongs to the TrpA family. In terms of assembly, tetramer of two alpha and two beta chains.

It catalyses the reaction (1S,2R)-1-C-(indol-3-yl)glycerol 3-phosphate + L-serine = D-glyceraldehyde 3-phosphate + L-tryptophan + H2O. The protein operates within amino-acid biosynthesis; L-tryptophan biosynthesis; L-tryptophan from chorismate: step 5/5. Its function is as follows. The alpha subunit is responsible for the aldol cleavage of indoleglycerol phosphate to indole and glyceraldehyde 3-phosphate. This is Tryptophan synthase alpha chain from Allorhizobium ampelinum (strain ATCC BAA-846 / DSM 112012 / S4) (Agrobacterium vitis (strain S4)).